The sequence spans 411 residues: S-adenosylmethionine synthase (411 aa).

H15 serves as a coordination point for ATP. Mg(2+) is bound at residue D17. Residue E43 coordinates K(+). Residues E56 and Q100 each contribute to the L-methionine site. Residues Q100 to E110 are flexible loop. ATP contacts are provided by residues D171–K173, K248–F249, D257, R263–K264, A280, and K284. L-methionine is bound at residue D257. K288 lines the L-methionine pocket.

This sequence belongs to the AdoMet synthase family. As to quaternary structure, homotetramer; dimer of dimers. It depends on Mg(2+) as a cofactor. K(+) is required as a cofactor.

It is found in the cytoplasm. The catalysed reaction is L-methionine + ATP + H2O = S-adenosyl-L-methionine + phosphate + diphosphate. Its pathway is amino-acid biosynthesis; S-adenosyl-L-methionine biosynthesis; S-adenosyl-L-methionine from L-methionine: step 1/1. Its function is as follows. Catalyzes the formation of S-adenosylmethionine (AdoMet) from methionine and ATP. The overall synthetic reaction is composed of two sequential steps, AdoMet formation and the subsequent tripolyphosphate hydrolysis which occurs prior to release of AdoMet from the enzyme. The chain is S-adenosylmethionine synthase from Synechococcus sp. (strain CC9605).